Consider the following 166-residue polypeptide: Regulatory protein RecX (166 aa).

It belongs to the RecX family.

Its subcellular location is the cytoplasm. Modulates RecA activity. The protein is Regulatory protein RecX of Escherichia coli (strain SE11).